Consider the following 284-residue polypeptide: ATP synthase gamma chain (284 aa).

It belongs to the ATPase gamma chain family. F-type ATPases have 2 components, CF(1) - the catalytic core - and CF(0) - the membrane proton channel. CF(1) has five subunits: alpha(3), beta(3), gamma(1), delta(1), epsilon(1). CF(0) has three main subunits: a, b and c.

The protein resides in the cell membrane. In terms of biological role, produces ATP from ADP in the presence of a proton gradient across the membrane. The gamma chain is believed to be important in regulating ATPase activity and the flow of protons through the CF(0) complex. The sequence is that of ATP synthase gamma chain from Pelotomaculum thermopropionicum (strain DSM 13744 / JCM 10971 / SI).